A 1024-amino-acid polypeptide reads, in one-letter code: Gamma-tubulin complex component 5 (1024 aa).

Disordered regions lie at residues 153 to 203, 523 to 545, and 853 to 873; these read IGLG…GGPQ, NEDK…SSRQ, and SQAK…GPPK. The span at 189–198 shows a compositional bias: basic and acidic residues; it reads TPLEEQDHNR. The span at 529–543 shows a compositional bias: low complexity; the sequence is DSASASSGSDQGPSS. Basic and acidic residues predominate over residues 853–864; sequence SQAKEDIPRDQD.

The protein belongs to the TUBGCP family. Component of the gamma-tubulin ring complex (gTuRC) consisting of TUBGCP2, TUBGCP3, TUBGCP4, TUBGCP5 and TUBGCP6 and gamma-tubulin TUBG1 or TUBG2. TUBGCP2, TUBGCP3, TUBGCP4, TUBGCP5 and TUBGCP6 assemble in a 5:5:2:1:1 stoichiometry; each is associated with a gamma-tubulin, thereby arranging 14 gamma-tubulins in a helical manner. Gamma-tubulin at the first position is blocked by TUBGCP3 at the last position, allowing 13 protafilaments to grow into a microtubule. The gTuRC (via TUBGCP3 and TUBGCP6) interacts with ACTB and MZT1; the interactions form a luminal bridge that stabilizes the initial structure during complex assembly. The gTuRC (via TUBGCP2) interacts with MZT2A/MZT2B and CDK5RAP2 (via CM1 motif); the interactions play a role in gTuRC activation.

The protein resides in the cytoplasm. It is found in the cytoskeleton. It localises to the microtubule organizing center. Its subcellular location is the centrosome. Functionally, component of the gamma-tubulin ring complex (gTuRC) which mediates microtubule nucleation. The gTuRC regulates the minus-end nucleation of alpha-beta tubulin heterodimers that grow into microtubule protafilaments, a critical step in centrosome duplication and spindle formation. The protein is Gamma-tubulin complex component 5 (Tubgcp5) of Mus musculus (Mouse).